The chain runs to 475 residues: Ribulose bisphosphate carboxylase large chain (475 aa).

Positions 1-2 (MS) are excised as a propeptide. P3 carries the N-acetylproline modification. K14 is subject to N6,N6,N6-trimethyllysine. N123 and T173 together coordinate substrate. The Proton acceptor role is filled by K175. Residue K177 participates in substrate binding. K201, D203, and E204 together coordinate Mg(2+). An N6-carboxylysine modification is found at K201. The active-site Proton acceptor is the H294. Substrate is bound by residues R295, H327, and S379.

The protein belongs to the RuBisCO large chain family. Type I subfamily. In terms of assembly, heterohexadecamer of 8 large chains and 8 small chains; disulfide-linked. The disulfide link is formed within the large subunit homodimers. Mg(2+) is required as a cofactor. In terms of processing, the disulfide bond which can form in the large chain dimeric partners within the hexadecamer appears to be associated with oxidative stress and protein turnover.

It localises to the plastid. The protein resides in the chloroplast. It carries out the reaction 2 (2R)-3-phosphoglycerate + 2 H(+) = D-ribulose 1,5-bisphosphate + CO2 + H2O. The catalysed reaction is D-ribulose 1,5-bisphosphate + O2 = 2-phosphoglycolate + (2R)-3-phosphoglycerate + 2 H(+). Functionally, ruBisCO catalyzes two reactions: the carboxylation of D-ribulose 1,5-bisphosphate, the primary event in carbon dioxide fixation, as well as the oxidative fragmentation of the pentose substrate in the photorespiration process. Both reactions occur simultaneously and in competition at the same active site. This is Ribulose bisphosphate carboxylase large chain from Citrus sinensis (Sweet orange).